The sequence spans 247 residues: Segregation and condensation protein A (247 aa).

The protein belongs to the ScpA family. In terms of assembly, component of a cohesin-like complex composed of ScpA, ScpB and the Smc homodimer, in which ScpA and ScpB bind to the head domain of Smc. The presence of the three proteins is required for the association of the complex with DNA.

The protein resides in the cytoplasm. Functionally, participates in chromosomal partition during cell division. May act via the formation of a condensin-like complex containing Smc and ScpB that pull DNA away from mid-cell into both cell halves. This is Segregation and condensation protein A from Bacillus cereus (strain G9842).